Consider the following 644-residue polypeptide: Exoribonuclease 2 (644 aa).

The 328-residue stretch at Arg-189–Lys-516 folds into the RNB domain. Residues Asp-561–Val-643 enclose the S1 motif domain.

This sequence belongs to the RNR ribonuclease family. RNase II subfamily.

The protein resides in the cytoplasm. It carries out the reaction Exonucleolytic cleavage in the 3'- to 5'-direction to yield nucleoside 5'-phosphates.. In terms of biological role, involved in mRNA degradation. Hydrolyzes single-stranded polyribonucleotides processively in the 3' to 5' direction. The protein is Exoribonuclease 2 of Escherichia coli O45:K1 (strain S88 / ExPEC).